The following is a 486-amino-acid chain: Ribulose bisphosphate carboxylase large chain (486 aa).

The substrate site is built by asparagine 126 and threonine 176. The active-site Proton acceptor is the lysine 178. Lysine 180 lines the substrate pocket. Mg(2+)-binding residues include lysine 204, aspartate 206, and glutamate 207. Lysine 204 is subject to N6-carboxylysine. The active-site Proton acceptor is the histidine 296. The substrate site is built by arginine 297, histidine 329, and serine 381.

Belongs to the RuBisCO large chain family. Type I subfamily. Heterohexadecamer of 8 large chains and 8 small chains. The cofactor is Mg(2+).

It catalyses the reaction 2 (2R)-3-phosphoglycerate + 2 H(+) = D-ribulose 1,5-bisphosphate + CO2 + H2O. The catalysed reaction is D-ribulose 1,5-bisphosphate + O2 = 2-phosphoglycolate + (2R)-3-phosphoglycerate + 2 H(+). RuBisCO catalyzes two reactions: the carboxylation of D-ribulose 1,5-bisphosphate, the primary event in carbon dioxide fixation, as well as the oxidative fragmentation of the pentose substrate. Both reactions occur simultaneously and in competition at the same active site. In Rhizobium meliloti (strain 1021) (Ensifer meliloti), this protein is Ribulose bisphosphate carboxylase large chain.